A 456-amino-acid chain; its full sequence is UDP-N-acetylmuramate--L-alanine ligase (456 aa).

Residue 112 to 118 (GTHGKTT) participates in ATP binding.

It belongs to the MurCDEF family.

It localises to the cytoplasm. It catalyses the reaction UDP-N-acetyl-alpha-D-muramate + L-alanine + ATP = UDP-N-acetyl-alpha-D-muramoyl-L-alanine + ADP + phosphate + H(+). It functions in the pathway cell wall biogenesis; peptidoglycan biosynthesis. Its function is as follows. Cell wall formation. This Trichlorobacter lovleyi (strain ATCC BAA-1151 / DSM 17278 / SZ) (Geobacter lovleyi) protein is UDP-N-acetylmuramate--L-alanine ligase.